Consider the following 940-residue polypeptide: Phosphoenolpyruvate carboxylase (940 aa).

Residues His138 and Lys603 contribute to the active site.

The protein belongs to the PEPCase type 1 family. The cofactor is Mg(2+).

The enzyme catalyses oxaloacetate + phosphate = phosphoenolpyruvate + hydrogencarbonate. Functionally, forms oxaloacetate, a four-carbon dicarboxylic acid source for the tricarboxylic acid cycle. The chain is Phosphoenolpyruvate carboxylase from Streptococcus thermophilus (strain CNRZ 1066).